A 205-amino-acid chain; its full sequence is Ribonuclease HII (205 aa).

An RNase H type-2 domain is found at 13–205; it reads TIVAGVDEVG…APVKYMLSMC (193 aa). Positions 19, 20, and 114 each coordinate a divalent metal cation.

Belongs to the RNase HII family. Requires Mn(2+) as cofactor. It depends on Mg(2+) as a cofactor.

The protein localises to the cytoplasm. It catalyses the reaction Endonucleolytic cleavage to 5'-phosphomonoester.. Endonuclease that specifically degrades the RNA of RNA-DNA hybrids. The sequence is that of Ribonuclease HII from Blochmanniella floridana.